Consider the following 113-residue polypeptide: MFSIRISTVVLAASALLAVAIPMTNTETPQCNTGPIQCCNSVQSATSSAAAGPLAALGVLSGIASLLGEVGLDCSPLQVIGVGANSCSSQAACCTGNTFNGAVVLGCSPIKLL.

The first 26 residues, 1 to 26 (MFSIRISTVVLAASALLAVAIPMTNT), serve as a signal peptide directing secretion. 4 disulfide bridges follow: C31–C93, C38–C87, C39–C74, and C94–C107.

The protein belongs to the fungal hydrophobin family. As to quaternary structure, self-assembles to form functional amyloid fibrils called rodlets. Self-assembly into fibrillar rodlets occurs spontaneously at hydrophobic:hydrophilic interfaces and the rodlets further associate laterally to form amphipathic monolayers. Expressed in the fruiting bodies but not in vegetative mycelium.

It localises to the secreted. Its subcellular location is the cell wall. Functionally, aerial growth, conidiation, and dispersal of filamentous fungi in the environment rely upon a capability of their secreting small amphipathic proteins called hydrophobins (HPBs) with low sequence identity. Class I can self-assemble into an outermost layer of rodlet bundles on aerial cell surfaces, conferring cellular hydrophobicity that supports fungal growth, development and dispersal; whereas Class II form highly ordered films at water-air interfaces through intermolecular interactions but contribute nothing to the rodlet structure. POH1 is a class I hydrophobin that is involved in the formation of mycelium knots and subsequent fruiting bodies. The polypeptide is Class I hydrophobin POH1 (Pleurotus ostreatus (Oyster mushroom)).